We begin with the raw amino-acid sequence, 236 residues long: 2,3,4,5-tetrahydropyridine-2,6-dicarboxylate N-acetyltransferase (236 aa).

Belongs to the transferase hexapeptide repeat family. DapH subfamily.

It catalyses the reaction (S)-2,3,4,5-tetrahydrodipicolinate + acetyl-CoA + H2O = L-2-acetamido-6-oxoheptanedioate + CoA. It functions in the pathway amino-acid biosynthesis; L-lysine biosynthesis via DAP pathway; LL-2,6-diaminopimelate from (S)-tetrahydrodipicolinate (acetylase route): step 1/3. Catalyzes the transfer of an acetyl group from acetyl-CoA to tetrahydrodipicolinate. The polypeptide is 2,3,4,5-tetrahydropyridine-2,6-dicarboxylate N-acetyltransferase (Clostridium botulinum (strain Loch Maree / Type A3)).